Here is a 117-residue protein sequence, read N- to C-terminus: G antigen 6 (117 aa).

A disordered region spans residues 1-117; that stretch reads MSWRGRSTYY…PEEGEKQSQC (117 aa). Acidic residues-rich tracts occupy residues 32–45 and 87–96; these read FSDEVEPATPEEGE and ECEDGPDGQE. The segment covering 103–117 has biased composition (basic and acidic residues); the sequence is EEVKTPEEGEKQSQC.

This sequence belongs to the GAGE family. In terms of tissue distribution, expressed in a variety of tumor tissues but not in normal tissues, except testis.

The protein is G antigen 6 (GAGE6) of Homo sapiens (Human).